We begin with the raw amino-acid sequence, 330 residues long: Protoheme IX farnesyltransferase (330 aa).

9 helical membrane passes run 30 to 50 (LVKP…MWMA), 58 to 78 (FFIT…INMV), 106 to 126 (LIFS…FTNL), 127 to 147 (LAAG…THWL), 155 to 175 (IVIG…ATTG), 182 to 202 (WVMF…LAIL), 228 to 248 (ILLY…PLGM), 249 to 269 (LGSF…WKAV), and 281 to 301 (AASL…AMGL).

Belongs to the UbiA prenyltransferase family. Protoheme IX farnesyltransferase subfamily.

Its subcellular location is the cell inner membrane. The catalysed reaction is heme b + (2E,6E)-farnesyl diphosphate + H2O = Fe(II)-heme o + diphosphate. It functions in the pathway porphyrin-containing compound metabolism; heme O biosynthesis; heme O from protoheme: step 1/1. Converts heme B (protoheme IX) to heme O by substitution of the vinyl group on carbon 2 of heme B porphyrin ring with a hydroxyethyl farnesyl side group. The sequence is that of Protoheme IX farnesyltransferase from Synechococcus sp. (strain JA-2-3B'a(2-13)) (Cyanobacteria bacterium Yellowstone B-Prime).